We begin with the raw amino-acid sequence, 128 residues long: Gastrotropin (128 aa).

At Ala2 the chain carries N-acetylalanine.

The protein belongs to the calycin superfamily. Fatty-acid binding protein (FABP) family.

The protein resides in the cytoplasm. It is found in the membrane. Binds to bile acids and is involved in enterohepatic bile acid metabolism. Required for efficient apical to basolateral transport of conjugated bile acids in ileal enterocytes. Stimulates gastric acid and pepsinogen secretion. The polypeptide is Gastrotropin (FABP6) (Bos taurus (Bovine)).